A 168-amino-acid chain; its full sequence is Troponin I, cardiac muscle (168 aa).

Positions Val-128–Val-147 are enriched in basic and acidic residues. Positions Val-128–Gly-168 are disordered.

This sequence belongs to the troponin I family. Binds to actin and tropomyosin.

Troponin I is the inhibitory subunit of troponin, the thin filament regulatory complex which confers calcium-sensitivity to striated muscle actomyosin ATPase activity. This is Troponin I, cardiac muscle (TNNI3) from Gallus gallus (Chicken).